A 220-amino-acid chain; its full sequence is UPF0319 protein YccT (220 aa).

A signal peptide spans M1–A20.

The protein belongs to the UPF0319 family.

The protein is UPF0319 protein YccT of Salmonella enteritidis PT4 (strain P125109).